The chain runs to 277 residues: Small ribosomal subunit protein uS2 (277 aa).

Residues 228 to 241 show a composition bias toward basic and acidic residues; sequence YEERLQAETDKDAE. Residues 228 to 277 form a disordered region; that stretch reads YEERLQAETDKDAESSTVQQEENPEADIPESIETKESVSAAADSDLDENE.

Belongs to the universal ribosomal protein uS2 family.

This is Small ribosomal subunit protein uS2 from Syntrophus aciditrophicus (strain SB).